We begin with the raw amino-acid sequence, 496 residues long: Glycerol kinase (496 aa).

Position 12 (Thr-12) interacts with ADP. ATP-binding residues include Thr-12, Thr-13, and Ser-14. Residue Thr-12 coordinates sn-glycerol 3-phosphate. Arg-16 contacts ADP. Arg-82, Glu-83, and Tyr-134 together coordinate sn-glycerol 3-phosphate. Residues Arg-82, Glu-83, and Tyr-134 each coordinate glycerol. At His-230 the chain carries Phosphohistidine; by HPr. Asp-244 is a binding site for sn-glycerol 3-phosphate. Residues Asp-244 and Gln-245 each contribute to the glycerol site. ADP contacts are provided by Thr-266 and Gly-309. Residues Thr-266, Gly-309, Gln-313, and Gly-410 each coordinate ATP. ADP contacts are provided by Gly-410 and Asn-414.

This sequence belongs to the FGGY kinase family. As to quaternary structure, homotetramer and homodimer (in equilibrium). The phosphoenolpyruvate-dependent sugar phosphotransferase system (PTS), including enzyme I, and histidine-containing protein (HPr) are required for the phosphorylation, which leads to the activation of the enzyme.

It carries out the reaction glycerol + ATP = sn-glycerol 3-phosphate + ADP + H(+). Its pathway is polyol metabolism; glycerol degradation via glycerol kinase pathway; sn-glycerol 3-phosphate from glycerol: step 1/1. Activated by phosphorylation and inhibited by fructose 1,6-bisphosphate (FBP). Its function is as follows. Key enzyme in the regulation of glycerol uptake and metabolism. Catalyzes the phosphorylation of glycerol to yield sn-glycerol 3-phosphate. The polypeptide is Glycerol kinase (Bacillus cereus (strain Q1)).